The chain runs to 6269 residues: Nonribosomal peptide synthetase 1 (6269 aa).

Positions E249–I781 are adenylation 1. The 77-residue stretch at R803–T879 folds into the Carrier 1 domain. Residue S840 is modified to O-(pantetheine 4'-phosphoryl)serine. The tract at residues L894–L1342 is epimerase 1. Residues S1373 to H1775 are condensation 1. Residues H1725 to R2333 form an adenylation 2 region. Positions K2364–T2386 are disordered. The segment covering P2367 to S2376 has biased composition (low complexity). Over residues A2377–T2386 the composition is skewed to polar residues. The condensation 2 stretch occupies residues W2597–Y2670. Residues R2845–R3368 form an adenylation 3 region. The Carrier 2 domain maps to A3392–Q3468. S3429 is subject to O-(pantetheine 4'-phosphoryl)serine. The condensation 3 stretch occupies residues C3512–L3898. The tract at residues D3919–I4454 is adenylation 4. A Carrier 3 domain is found at E4487 to T4563. At S4524 the chain carries O-(pantetheine 4'-phosphoryl)serine. The interval L4578–D5024 is epimerase 2. Positions S5052–L5466 are condensation 4. A Carrier 4 domain is found at S5552–N5628. Residue S5589 is modified to O-(pantetheine 4'-phosphoryl)serine. A disordered region spans residues N5628–N5658. The span at N5642–R5657 shows a compositional bias: basic and acidic residues. A condensation 5 region spans residues F5720–S6067. A Carrier 5 domain is found at S6139–N6220.

It belongs to the NRP synthetase family. Post-translationally, the thiolation domains are 4'-phosphopantetheinylated.

Its function is as follows. Nonribosomal peptide synthesis (NRPS) is a key mechanism responsible for the biosynthesis of bioactive metabolites which are potentially contributing to organismal virulence. Contributes to improved fungal tolerance against oxidative stress, during the infection process. This is Nonribosomal peptide synthetase 1 (NRPS1) from Aspergillus fumigatus (strain ATCC MYA-4609 / CBS 101355 / FGSC A1100 / Af293) (Neosartorya fumigata).